Reading from the N-terminus, the 285-residue chain is Methanethiol S-methyltransferase 1 (285 aa).

Transmembrane regions (helical) follow at residues 55-75 (AYLV…GLVV), 88-108 (AEAV…HSVM), 132-152 (LFAS…PTVI), 162-182 (VTLV…TFII), and 224-244 (FIVA…FAAV).

This sequence belongs to the nurim family.

The protein resides in the membrane. It catalyses the reaction methanethiol + S-adenosyl-L-methionine = dimethyl sulfide + S-adenosyl-L-homocysteine + H(+). In terms of biological role, catalyzes the methylation of methanethiol (MeSH) to yield dimethylsulphide (DMS). The chain is Methanethiol S-methyltransferase 1 from Bradyrhizobium diazoefficiens (strain JCM 10833 / BCRC 13528 / IAM 13628 / NBRC 14792 / USDA 110).